A 135-amino-acid polypeptide reads, in one-letter code: Small ribosomal subunit protein bS6 (135 aa).

Residues 96-135 (HAEGPSIQMQKRDERERGDRGDRSDRGDRGDRGDRGGFRR) form a disordered region. Residues 105-135 (QKRDERERGDRGDRSDRGDRGDRGDRGGFRR) are compositionally biased toward basic and acidic residues.

Belongs to the bacterial ribosomal protein bS6 family.

Its function is as follows. Binds together with bS18 to 16S ribosomal RNA. The protein is Small ribosomal subunit protein bS6 of Cereibacter sphaeroides (strain ATCC 17029 / ATH 2.4.9) (Rhodobacter sphaeroides).